A 146-amino-acid chain; its full sequence is ATP synthase epsilon chain 2 (146 aa).

Belongs to the ATPase epsilon chain family. As to quaternary structure, F-type ATPases have 2 components, CF(1) - the catalytic core - and CF(0) - the membrane proton channel. CF(1) has five subunits: alpha(3), beta(3), gamma(1), delta(1), epsilon(1). CF(0) has three main subunits: a, b and c.

The protein resides in the cell inner membrane. Functionally, produces ATP from ADP in the presence of a proton gradient across the membrane. This Cereibacter sphaeroides (strain ATCC 17023 / DSM 158 / JCM 6121 / CCUG 31486 / LMG 2827 / NBRC 12203 / NCIMB 8253 / ATH 2.4.1.) (Rhodobacter sphaeroides) protein is ATP synthase epsilon chain 2.